We begin with the raw amino-acid sequence, 239 residues long: Putative HTH-type transcriptional regulator YkgA (239 aa).

An HTH araC/xylS-type domain is found at 19-117 (QQLLEWIECN…GCSPREYRHR (99 aa)). 2 consecutive DNA-binding regions (H-T-H motif) follow at residues 36–57 (EDIA…RNFM) and 84–107 (MLDI…KKLF).

The polypeptide is Putative HTH-type transcriptional regulator YkgA (ykgA) (Escherichia coli (strain K12)).